A 666-amino-acid polypeptide reads, in one-letter code: Protein OS-9 (666 aa).

The first 30 residues, 1-30 (MAAEALLSSLLGLLFLGLLLPAHLTGGVGS), serve as a signal peptide directing secretion. Residues 108–230 (APCLLKTKDW…SIRTSRLCPH (123 aa)) enclose the MRH domain. Cysteines 110 and 123 form a disulfide. A mannooligosaccharide derivative is bound by residues tryptophan 117, tryptophan 118, and glutamine 130. N-linked (GlcNAc...) asparagine glycosylation occurs at asparagine 177. Intrachain disulfides connect cysteine 181-cysteine 216 and cysteine 196-cysteine 228. Positions 182, 188, 212, and 218 each coordinate a mannooligosaccharide derivative. Disordered stretches follow at residues 261–356 (RQAE…NVQV), 370–449 (EELK…SDRE), 505–540 (ESQS…EHRV), and 631–666 (EANK…EFDF). 2 stretches are compositionally biased toward basic and acidic residues: residues 263–281 (AESK…DTDH) and 294–310 (PKKE…ESEF). Residues 320–332 (QATGTEEAQAGEQ) are compositionally biased toward low complexity. Composition is skewed to basic and acidic residues over residues 370 to 379 (EELKGAEKGK) and 395 to 412 (PQRE…RGLV). Positions 413-429 (EEEDGDEEEEDEDEDEQ) are enriched in acidic residues. A compositionally biased stretch (basic and acidic residues) spans 434 to 449 (EFEKELEGMLLPSDRE). The span at 631 to 646 (EANKERQRQSELESNY) shows a compositional bias: basic and acidic residues. Over residues 657–666 (DTGDLDEFDF) the composition is skewed to acidic residues.

Belongs to the OS-9 family. Component of the HRD1 complex, which comprises at least SYNV1/HRD1, DERL1/2, FAM8A1, HERPUD1/HERP, OS9, SEL1L and UBE2J1. FAM8A1 is stabilized by interaction with SYNV1, which prevents its proteasomal degradation. OS9 and UBE2J1 recruitment to the complex may be mediated by SEL1L. Through this complex, may interact with ERLEC1 and HSPA5. Interacts (via C-terminus) with CPNE6 (via second C2 domain); this interaction occurs in a calcium-dependent manner in vitro. Interacts with CREB3. Post-translationally, intramolecular disulfide bonds.

The protein resides in the endoplasmic reticulum lumen. Functionally, lectin component of the HRD1 complex, which functions in endoplasmic reticulum (ER) quality control and ER-associated degradation (ERAD). Specifically recognizes and binds improperly folded glycoproteins as well as hyperglycosylated proteins, retain them in the ER, and transfers them to the ubiquitination machinery and promote their degradation. Possible targets include TRPV4 as well as hyperglycosylated HSP90B1. This chain is Protein OS-9 (Os9), found in Rattus norvegicus (Rat).